The following is a 125-amino-acid chain: Acidic phospholipase A2 6 (125 aa).

Residue serine 1 is a signal peptide. Residues 2-7 constitute a propeptide that is removed on maturation; sequence NRPMPL. Intrachain disulfides connect cysteine 18-cysteine 77, cysteine 33-cysteine 124, cysteine 35-cysteine 50, cysteine 49-cysteine 105, cysteine 56-cysteine 98, cysteine 66-cysteine 91, and cysteine 84-cysteine 96. Position 30 (aspartate 30) interacts with Zn(2+). Ca(2+)-binding residues include tyrosine 34 and glycine 36. The active site involves histidine 53. Aspartate 54 is a binding site for Ca(2+). The active site involves aspartate 99.

In terms of assembly, heterodimer formed between isoform 5 and isoform 6 in presence of zinc ion and monomer in absence of zinc ion. The cofactor is Ca(2+). As to expression, expressed by the venom gland.

Its subcellular location is the secreted. The enzyme catalyses a 1,2-diacyl-sn-glycero-3-phosphocholine + H2O = a 1-acyl-sn-glycero-3-phosphocholine + a fatty acid + H(+). Its function is as follows. PLA2 catalyzes the calcium-dependent hydrolysis of the 2-acyl groups in 3-sn-phosphoglycerides. This is Acidic phospholipase A2 6 from Naja sagittifera (Andaman cobra).